Reading from the N-terminus, the 131-residue chain is Small ribosomal subunit protein eS24 (131 aa).

An N-acetylmethionine modification is found at Met-1. A Phosphothreonine modification is found at Thr-9. A Glycyl lysine isopeptide (Lys-Gly) (interchain with G-Cter in SUMO2) cross-link involves residue Lys-37. Over residues 90-100 (RLARHGLYEKK) the composition is skewed to basic and acidic residues. The disordered stretch occupies residues 90–131 (RLARHGLYEKKKTSRKQRKERKNRMKKVRGTAKANVGAGKKK). Residues 101–119 (KTSRKQRKERKNRMKKVRG) are compositionally biased toward basic residues.

Belongs to the eukaryotic ribosomal protein eS24 family. In terms of assembly, component of the small ribosomal subunit. Part of the small subunit (SSU) processome, composed of more than 70 proteins and the RNA chaperone small nucleolar RNA (snoRNA) U3.

The protein localises to the cytoplasm. It is found in the nucleus. The protein resides in the nucleolus. Component of the small ribosomal subunit. The ribosome is a large ribonucleoprotein complex responsible for the synthesis of proteins in the cell. Required for processing of pre-rRNA and maturation of 40S ribosomal subunits. Part of the small subunit (SSU) processome, first precursor of the small eukaryotic ribosomal subunit. During the assembly of the SSU processome in the nucleolus, many ribosome biogenesis factors, an RNA chaperone and ribosomal proteins associate with the nascent pre-rRNA and work in concert to generate RNA folding, modifications, rearrangements and cleavage as well as targeted degradation of pre-ribosomal RNA by the RNA exosome. The protein is Small ribosomal subunit protein eS24 (RPS24) of Macaca fascicularis (Crab-eating macaque).